The sequence spans 105 residues: uncharacterized protein (105 aa).

Positions 1–101 constitute a Hcy-binding domain; sequence MMDLGDKINP…KDIQEISAAV (101 aa).

This is an uncharacterized protein from Saccharomyces cerevisiae (strain ATCC 204508 / S288c) (Baker's yeast).